The chain runs to 185 residues: Coordinator of PRMT5 and differentiation stimulator (185 aa).

Met1 carries the post-translational modification N-acetylmethionine. The segment at 1-109 (MDPPTAGAQS…MSGCLPKEQA (109 aa)) is disordered. Composition is skewed to basic and acidic residues over residues 42–52 (SSQEKATENAT) and 66–77 (SPAHGEGTHCEE). Ser66 carries the phosphoserine modification. The segment covering 78–89 (EGFAEDDEDSDG) has biased composition (acidic residues).

As to quaternary structure, interacts with PRMT5. Interacts with histone H4; specifically interacts with the N-terminus of histone H4 but not with histone H3. Interacts with CBFB. Found in a complex with PRMT5, RUNX1 and CBFB.

It is found in the nucleus. Its function is as follows. Histone-binding protein required for histone H4 methyltransferase activity of PRMT5. Specifically required for histone H4 'Arg-3' methylation mediated by PRMT5, but not histone H3 'Arg-8' methylation, suggesting that it modulates the substrate specificity of PRMT5. Specifically interacts with the N-terminus of histone H4 but not with histone H3, suggesting that it acts by promoting the association between histone H4 and PRMT5. Involved in CCNE1 promoter repression. Plays a role in muscle cell differentiation by modulating the recruitment of PRMT5 to the promoter of genes involved in the coordination between cell cycle exit and muscle differentiation. This Bos taurus (Bovine) protein is Coordinator of PRMT5 and differentiation stimulator (COPRS).